The chain runs to 64 residues: Beta sliding clamp (64 aa).

It belongs to the beta sliding clamp family. In terms of assembly, forms a ring-shaped head-to-tail homodimer around DNA which binds and tethers DNA polymerases and other proteins to the DNA. The DNA replisome complex has a single clamp-loading complex (3 tau and 1 each of delta, delta', psi and chi subunits) which binds 3 Pol III cores (1 core on the leading strand and 2 on the lagging strand) each with a beta sliding clamp dimer. Additional proteins in the replisome are other copies of gamma, psi and chi, Ssb, DNA helicase and RNA primase.

Its subcellular location is the cytoplasm. In terms of biological role, confers DNA tethering and processivity to DNA polymerases and other proteins. Acts as a clamp, forming a ring around DNA (a reaction catalyzed by the clamp-loading complex) which diffuses in an ATP-independent manner freely and bidirectionally along dsDNA. Initially characterized for its ability to contact the catalytic subunit of DNA polymerase III (Pol III), a complex, multichain enzyme responsible for most of the replicative synthesis in bacteria; Pol III exhibits 3'-5' exonuclease proofreading activity. The beta chain is required for initiation of replication as well as for processivity of DNA replication. This is Beta sliding clamp (dnaN) from Actinobacillus pleuropneumoniae (Haemophilus pleuropneumoniae).